The following is a 923-amino-acid chain: Neuropilin-1 (923 aa).

An N-terminal signal peptide occupies residues 1–21 (MERGLPLLCAVLALVLAPAGA). The Extracellular segment spans residues 22–856 (FRNDKCGDTI…PGNVLKTLDP (835 aa)). Cystine bridges form between Cys-27–Cys-54, Cys-82–Cys-104, and Cys-147–Cys-173. 2 CUB domains span residues 27–141 (CGDT…YEIF) and 147–265 (CSQN…YSVL). An N-linked (GlcNAc...) asparagine glycan is attached at Asn-150. Residues Glu-195, Asp-209, and Asp-250 each contribute to the Ca(2+) site. Cysteines 206 and 228 form a disulfide. Asn-261, Asn-300, and Asn-522 each carry an N-linked (GlcNAc...) asparagine glycan. 2 cysteine pairs are disulfide-bonded: Cys-275–Cys-424 and Cys-431–Cys-583. 2 F5/8 type C domains span residues 275–424 (CMEA…VYGC) and 431–583 (CSGM…LLGC). O-linked (Xyl...) (chondroitin sulfate) serine; alternate glycosylation is present at Ser-612. Ser-612 is a glycosylation site (O-linked (Xyl...) (heparan sulfate) serine; alternate). Positions 645 to 811 (TYGFNCEFGW…NHISQEDCAK (167 aa)) constitute an MAM domain. A disordered region spans residues 820–845 (PEIKIDETGSTPGYEGEGEGDKNISR). A glycan (O-linked (Xyl...) (chondroitin sulfate) serine) is linked at Ser-829. Residue Asn-842 is glycosylated (N-linked (GlcNAc...) asparagine). Residues 857-879 (ILITIIAMSALGVLLGAVCGVVL) form a helical membrane-spanning segment. The Cytoplasmic portion of the chain corresponds to 880-923 (YCACWHNGMSERNLSALENYNFELVDGVKLKKDKLNTQSTYSEA). Residue Ser-894 is modified to Phosphoserine.

This sequence belongs to the neuropilin family. In terms of assembly, homodimer, and heterodimer with NRP2. Interacts with FER. Interacts with PLXNB1. Interacts with VEGFA. Interacts with ABCB8/MITOSUR in mitochondria. As to quaternary structure, (Microbial infection) Interacts with SARS coronavirus-2/SARS-CoV-2 spike protein S1 (via the CendR motif RRAR). The expression of isoforms 1 and 2 does not seem to overlap. Expressed in olfactory epithelium (at protein level). Expressed in fibroblasts (at protein level). Expressed by the blood vessels of different tissues. In the developing embryo it is found predominantly in the nervous system. In adult tissues, it is highly expressed in heart and placenta; moderately in lung, liver, skeletal muscle, kidney and pancreas; and low in adult brain. Expressed in the central nervous system, including olfactory related regions such as the olfactory tubercles and paraolfactory gyri. In terms of tissue distribution, the expression of isoforms 1 and 2 does not seem to overlap. Found in liver hepatocytes, kidney distal and proximal tubules.

The protein resides in the secreted. The protein localises to the mitochondrion membrane. Its subcellular location is the cell membrane. It localises to the cytoplasm. Its function is as follows. Cell-surface receptor involved in the development of the cardiovascular system, in angiogenesis, in the formation of certain neuronal circuits and in organogenesis outside the nervous system. Mediates the chemorepulsant activity of semaphorins. Recognizes a C-end rule (CendR) motif R/KXXR/K on its ligands which causes cellular internalization and vascular leakage. It binds to semaphorin 3A, the PLGF-2 isoform of PGF, the VEGF165 isoform of VEGFA and VEGFB. Coexpression with KDR results in increased VEGF165 binding to KDR as well as increased chemotaxis. Regulates VEGF-induced angiogenesis. Binding to VEGFA initiates a signaling pathway needed for motor neuron axon guidance and cell body migration, including for the caudal migration of facial motor neurons from rhombomere 4 to rhombomere 6 during embryonic development. Regulates mitochondrial iron transport via interaction with ABCB8/MITOSUR. In terms of biological role, (Microbial infection) Acts as a host factor for human coronavirus SARS-CoV-2 infection. Recognizes and binds to CendR motif RRAR on SARS-CoV-2 spike protein S1 which enhances SARS-CoV-2 infection. Functionally, binds VEGF-165 and may inhibit its binding to cells. May induce apoptosis by sequestering VEGF-165. May bind as well various members of the semaphorin family. Its expression has an averse effect on blood vessel number and integrity. The polypeptide is Neuropilin-1 (Homo sapiens (Human)).